The chain runs to 123 residues: Protein HesB, heterocyst (123 aa).

The protein belongs to the HesB/IscA family.

Functionally, may be required for efficient nitrogen fixation. The protein is Protein HesB, heterocyst (hesB1) of Trichormus variabilis (strain ATCC 29413 / PCC 7937) (Anabaena variabilis).